Here is a 456-residue protein sequence, read N- to C-terminus: Chaperone protein dnaJ GFA2, mitochondrial (456 aa).

The transit peptide at 1–89 (MVPSNGAKVL…RSFHGTGSSF (89 aa)) directs the protein to the mitochondrion. The 66-residue stretch at 94-159 (DYYSVLGVSK…EKRDLYDQVG (66 aa)) folds into the J domain. The segment at 225-303 (GCSKTVTFQT…CRGARVVRGQ (79 aa)) adopts a CR-type zinc-finger fold. Residues Cys-238, Cys-241, Cys-255, Cys-258, Cys-277, Cys-280, Cys-291, and Cys-294 each coordinate Zn(2+). CXXCXGXG motif repeat units lie at residues 238 to 245 (CNTCGGQG), 255 to 262 (CKACNGSG), 277 to 284 (CQKCGGAG), and 291 to 298 (CKSCRGAR).

The protein belongs to the DnaJ family. Widely expressed.

Its subcellular location is the mitochondrion. In terms of biological role, chaperone that may play a role in mitochondrial protein folding. Involved in female gametophyte development. Required for cell death of the synergid cells during fertilization process, and fusion of the polar nuclei during megagametogenesis. In Arabidopsis thaliana (Mouse-ear cress), this protein is Chaperone protein dnaJ GFA2, mitochondrial.